The sequence spans 157 residues: Protein p17 (157 aa).

2 disordered regions span residues 46–70 (VTFG…PEGK) and 83–157 (TSRK…STQR). Over residues 88–100 (LTPTPSLSPLTSL) the composition is skewed to low complexity. Residues 114-132 (TSTPIPSAGTSSTLTQRVL) show a composition bias toward polar residues. The segment covering 134-157 (SLRAPSASTRRSLTASSSSPSTQR) has biased composition (low complexity).

The protein is Protein p17 (p17) of Helicoverpa armigera (Cotton bollworm).